The primary structure comprises 371 residues: MKVGFVGWRGMVGSVLMQRMKEENDFAHIPEAFFFTTSNVGGAAPDFGQAAKTLLDANNVAELAKMDIIVTCQGGDYTKSVFQALRDSGWNGYWIDAASSLRMKDDAIIVLDPVNRDVLDNGLKNGVKNYIGGNCTVSLMLMALGGLFQNDLVEWATSMTYQAASGAGAKNMRELISGMGAVHAQVADALADPAGSILDIDRKVSDFLRSEDYPKANFGVPLAGSLIPWIDVDLGNGQSKEEWKGGVETNKILGRSDNPTVIDGLCVRVGAMRCHSQAITLKLKKDLPVSEIETILAGANDWVKVIPNEKEASIHELTPAKVTGTLSVPVGRIRKLGMGGEYISAFTVGDQLLWGAAEPLRRVLRIVLGSL.

NADP(+)-binding positions include 9-12, 37-38, and Gln73; these read RGMV and TS. Residue Arg102 participates in phosphate binding. Cys135 functions as the Acyl-thioester intermediate in the catalytic mechanism. Residue Gln162 participates in substrate binding. NADP(+)-binding positions include 165–166 and Pro193; that span reads SG. Glu241 contributes to the substrate binding site. Phosphate is bound at residue Lys244. Arg268 is a binding site for substrate. The active-site Proton acceptor is the His275. An NADP(+)-binding site is contributed by Gln351.

This sequence belongs to the aspartate-semialdehyde dehydrogenase family. As to quaternary structure, homodimer.

The catalysed reaction is L-aspartate 4-semialdehyde + phosphate + NADP(+) = 4-phospho-L-aspartate + NADPH + H(+). It functions in the pathway amino-acid biosynthesis; L-lysine biosynthesis via DAP pathway; (S)-tetrahydrodipicolinate from L-aspartate: step 2/4. The protein operates within amino-acid biosynthesis; L-methionine biosynthesis via de novo pathway; L-homoserine from L-aspartate: step 2/3. It participates in amino-acid biosynthesis; L-threonine biosynthesis; L-threonine from L-aspartate: step 2/5. In terms of biological role, catalyzes the NADPH-dependent formation of L-aspartate-semialdehyde (L-ASA) by the reductive dephosphorylation of L-aspartyl-4-phosphate. This is Aspartate-semialdehyde dehydrogenase from Neisseria meningitidis serogroup B (strain ATCC BAA-335 / MC58).